We begin with the raw amino-acid sequence, 297 residues long: Urease accessory protein UreD 2 (297 aa).

It belongs to the UreD family. UreD, UreF and UreG form a complex that acts as a GTP-hydrolysis-dependent molecular chaperone, activating the urease apoprotein by helping to assemble the nickel containing metallocenter of UreC. The UreE protein probably delivers the nickel.

The protein resides in the cytoplasm. In terms of biological role, required for maturation of urease via the functional incorporation of the urease nickel metallocenter. The protein is Urease accessory protein UreD 2 of Methylorubrum populi (strain ATCC BAA-705 / NCIMB 13946 / BJ001) (Methylobacterium populi).